The chain runs to 592 residues: Frizzled-9 (592 aa).

The N-terminal stretch at 1-23 (MAVPPLLRGALLLWQLLATGGAA) is a signal peptide. The Extracellular portion of the chain corresponds to 24–230 (LEIGRFDPER…EVFWSRRDKD (207 aa)). The FZ domain maps to 35–156 (RGPAPCQAME…NDPHALCMEA (122 aa)). Disulfide bonds link cysteine 40/cysteine 101, cysteine 48/cysteine 94, cysteine 85/cysteine 123, cysteine 112/cysteine 153, and cysteine 116/cysteine 140. A glycan (N-linked (GlcNAc...) asparagine) is linked at asparagine 54. Residues 59–173 (PNLLGHTSQG…PTEPHKGLGM (115 aa)) are required for Wnt-activated receptor activity. N-linked (GlcNAc...) asparagine glycosylation occurs at asparagine 159. Residues 231-251 (FALVWMAVWSALCFFSTAFTV) traverse the membrane as a helical segment. Residues 252–267 (FTFLLEPHRFQYPERP) lie on the Cytoplasmic side of the membrane. A helical transmembrane segment spans residues 268–288 (IIFLSMCYNVYSLAFLIRAVA). The Extracellular portion of the chain corresponds to 289-316 (GAQSVACDQEAGALYVIQEGLENTGCTL). A helical membrane pass occupies residues 317–337 (VFLLLYYFGMASSLWWVVLTL). Residues 338–356 (TWFLAAGKKWGHEAIEAHG) are Cytoplasmic-facing. Residues 357-377 (SYFHMAAWGLPALKTIVVLTL) form a helical membrane-spanning segment. At 378 to 401 (RKVAGDELTGLCYVASMDPAALTG) the chain is on the extracellular side. The chain crosses the membrane as a helical span at residues 402–422 (FVLVPLSCYLVLGTSFLLTGF). At 423–448 (VALFHIRKIMKTGGTNTEKLEKLMVK) the chain is on the cytoplasmic side. The helical transmembrane segment at 449–469 (IGVFSILYTVPATCVIVCYVY) threads the bilayer. Residues 470 to 509 (ERLNMDFWRLRATEQPCTAATVPGGRRDCSLPGGSVPTVA) are Extracellular-facing. A helical membrane pass occupies residues 510–530 (VFMLKIFMSLVVGITSGVWVW). Residues 531-592 (SSKTFQTWQS…DPSLENPTHL (62 aa)) lie on the Cytoplasmic side of the membrane. The Lys-Thr-X-X-X-Trp motif, mediates interaction with the PDZ domain of Dvl family members motif lies at 533–538 (KTFQTW). A required for CTNNB1 accumulation and TCF transcription factor activity region spans residues 555–592 (ACRTPGGYGRGTHCHYKAPTVVLHMTKTDPSLENPTHL).

It belongs to the G-protein coupled receptor Fz/Smo family. Post-translationally, ubiquitinated by ZNRF3, leading to its degradation by the proteasome. As to expression, in the embryo, found in the neural tube, trunk skeletal muscle precursors (myotomes), limb skeletal anlagen, craniofacial regions and nephric ducts. In the adult, expression is abundant in heart, brain, testis and skeletal muscle. In the testis, expressed in all spermatogenic cell types. Lower levels in adult lung, liver and kidney. Barely detectable in spleen. Expressed also in chondrocytes.

Its subcellular location is the cell membrane. In terms of biological role, receptor for WNT2 that is coupled to the beta-catenin canonical signaling pathway, which leads to the activation of disheveled proteins, inhibition of GSK-3 kinase, nuclear accumulation of beta-catenin and activation of Wnt target genes. Plays a role in neuromuscular junction (NMJ) assembly by negatively regulating the clustering of acetylcholine receptors (AChR) through the beta-catenin canonical signaling pathway. May play a role in neural progenitor cells (NPCs) viability through the beta-catenin canonical signaling pathway by negatively regulating cell cycle arrest leading to inhibition of neuron apoptotic process. During hippocampal development, regulates neuroblast proliferation and apoptotic cell death. Controls bone formation through non canonical Wnt signaling mediated via ISG15. Positively regulates bone regeneration through non canonical Wnt signaling. The protein is Frizzled-9 (Fzd9) of Mus musculus (Mouse).